Consider the following 131-residue polypeptide: MAAQLQYQGTGRRKNAVARVRLIPGEGKVTINKRELAEYFGKKTLEMIVQQPFGVTDTAGKYDVVALAHGGGTTGQAGALRLGIARALLKADPSLRPALKRAGFLTRDPRMKERRKYGLKKARKAPQFSKR.

The tract at residues 102 to 131 (AGFLTRDPRMKERRKYGLKKARKAPQFSKR) is disordered. The segment covering 112-131 (KERRKYGLKKARKAPQFSKR) has biased composition (basic residues).

This sequence belongs to the universal ribosomal protein uS9 family.

This is Small ribosomal subunit protein uS9 from Desulfitobacterium hafniense (strain DSM 10664 / DCB-2).